A 100-amino-acid chain; its full sequence is Urease subunit gamma (100 aa).

The protein belongs to the urease gamma subunit family. In terms of assembly, heterotrimer of UreA (gamma), UreB (beta) and UreC (alpha) subunits. Three heterotrimers associate to form the active enzyme.

It is found in the cytoplasm. The enzyme catalyses urea + 2 H2O + H(+) = hydrogencarbonate + 2 NH4(+). The protein operates within nitrogen metabolism; urea degradation; CO(2) and NH(3) from urea (urease route): step 1/1. The polypeptide is Urease subunit gamma (Blochmanniella pennsylvanica (strain BPEN)).